We begin with the raw amino-acid sequence, 314 residues long: 4-hydroxy-3-methylbut-2-enyl diphosphate reductase (314 aa).

Cys12 provides a ligand contact to [4Fe-4S] cluster. (2E)-4-hydroxy-3-methylbut-2-enyl diphosphate is bound by residues His41 and His74. Dimethylallyl diphosphate contacts are provided by His41 and His74. Positions 41 and 74 each coordinate isopentenyl diphosphate. Cys96 contacts [4Fe-4S] cluster. A (2E)-4-hydroxy-3-methylbut-2-enyl diphosphate-binding site is contributed by His124. His124 is a binding site for dimethylallyl diphosphate. Position 124 (His124) interacts with isopentenyl diphosphate. Residue Glu126 is the Proton donor of the active site. Thr167 is a (2E)-4-hydroxy-3-methylbut-2-enyl diphosphate binding site. Residue Cys197 coordinates [4Fe-4S] cluster. (2E)-4-hydroxy-3-methylbut-2-enyl diphosphate contacts are provided by Ser225, Ser226, Asn227, and Ser269. Dimethylallyl diphosphate contacts are provided by Ser225, Ser226, Asn227, and Ser269. The isopentenyl diphosphate site is built by Ser225, Ser226, Asn227, and Ser269.

This sequence belongs to the IspH family. Requires [4Fe-4S] cluster as cofactor.

It catalyses the reaction isopentenyl diphosphate + 2 oxidized [2Fe-2S]-[ferredoxin] + H2O = (2E)-4-hydroxy-3-methylbut-2-enyl diphosphate + 2 reduced [2Fe-2S]-[ferredoxin] + 2 H(+). The enzyme catalyses dimethylallyl diphosphate + 2 oxidized [2Fe-2S]-[ferredoxin] + H2O = (2E)-4-hydroxy-3-methylbut-2-enyl diphosphate + 2 reduced [2Fe-2S]-[ferredoxin] + 2 H(+). Its pathway is isoprenoid biosynthesis; dimethylallyl diphosphate biosynthesis; dimethylallyl diphosphate from (2E)-4-hydroxy-3-methylbutenyl diphosphate: step 1/1. The protein operates within isoprenoid biosynthesis; isopentenyl diphosphate biosynthesis via DXP pathway; isopentenyl diphosphate from 1-deoxy-D-xylulose 5-phosphate: step 6/6. Functionally, catalyzes the conversion of 1-hydroxy-2-methyl-2-(E)-butenyl 4-diphosphate (HMBPP) into a mixture of isopentenyl diphosphate (IPP) and dimethylallyl diphosphate (DMAPP). Acts in the terminal step of the DOXP/MEP pathway for isoprenoid precursor biosynthesis. The polypeptide is 4-hydroxy-3-methylbut-2-enyl diphosphate reductase (Pseudoalteromonas atlantica (strain T6c / ATCC BAA-1087)).